Here is a 184-residue protein sequence, read N- to C-terminus: GTP cyclohydrolase 1 (184 aa).

Cysteine 75, histidine 78, and cysteine 146 together coordinate Zn(2+).

Belongs to the GTP cyclohydrolase I family. As to quaternary structure, toroid-shaped homodecamer, composed of two pentamers of five dimers.

It catalyses the reaction GTP + H2O = 7,8-dihydroneopterin 3'-triphosphate + formate + H(+). It participates in cofactor biosynthesis; 7,8-dihydroneopterin triphosphate biosynthesis; 7,8-dihydroneopterin triphosphate from GTP: step 1/1. The sequence is that of GTP cyclohydrolase 1 from Streptococcus pneumoniae serotype 2 (strain D39 / NCTC 7466).